The sequence spans 89 residues: Long neurotoxin 1 (89 aa).

The first 21 residues, 1–21 (MKTLLLTLVVVTIVCLDLGDS), serve as a signal peptide directing secretion. Cystine bridges form between Cys24–Cys41, Cys34–Cys58, Cys62–Cys74, and Cys75–Cys80.

Belongs to the three-finger toxin family. Long-chain subfamily. Type II alpha-neurotoxin sub-subfamily. Expressed by the venom gland.

Its subcellular location is the secreted. Its function is as follows. Binds with high affinity to muscular (alpha-1/CHRNA1) and neuronal (alpha-7/CHRNA7) nicotinic acetylcholine receptor (nAChR) and inhibits acetylcholine from binding to the receptor, thereby impairing neuromuscular and neuronal transmission. The chain is Long neurotoxin 1 from Pseudonaja textilis (Eastern brown snake).